The chain runs to 483 residues: V-type proton ATPase subunit H (483 aa).

Residues Ser-59 and Ser-483 each carry the phosphoserine modification.

Belongs to the V-ATPase H subunit family. As to quaternary structure, V-ATPase is a heteromultimeric enzyme made up of two complexes: the ATP-hydrolytic V1 complex and the proton translocation V0 complex. The V1 complex consists of three catalytic AB heterodimers that form a heterohexamer, three peripheral stalks each consisting of EG heterodimers, one central rotor including subunits D and F, and the regulatory subunits C and H. The proton translocation complex V0 consists of the proton transport subunit a, a ring of proteolipid subunits c9c'', rotary subunit d, subunits e and f, and the accessory subunits ATP6AP1/Ac45 and ATP6AP2/PRR. Interacts with AP2M1.

It is found in the cytoplasmic vesicle. The protein localises to the clathrin-coated vesicle membrane. In terms of biological role, subunit of the V1 complex of vacuolar(H+)-ATPase (V-ATPase), a multisubunit enzyme composed of a peripheral complex (V1) that hydrolyzes ATP and a membrane integral complex (V0) that translocates protons. V-ATPase is responsible for acidifying and maintaining the pH of intracellular compartments and in some cell types, is targeted to the plasma membrane, where it is responsible for acidifying the extracellular environment. Subunit H is essential for V-ATPase activity, but not for the assembly of the complex. Involved in the endocytosis mediated by clathrin-coated pits, required for the formation of endosomes. This Mus musculus (Mouse) protein is V-type proton ATPase subunit H (Atp6v1h).